The chain runs to 70 residues: MARKLMARKTPPLVGLDTVQLRVETIWLTSQMDLFVLTDKGEPRITASRASASRVATFGMTSVWLKNSCF.

In terms of assembly, interacts with VP1. Interacts with Large T antigen. Interacts with small t antigen. In terms of processing, phosphorylated by host PKC. Phosphorylation alters the stability and may also have an impact on the subcellular location.

The protein localises to the host cytoplasm. It is found in the host nucleus. In terms of biological role, alters the structure of the nuclear envelope. Involved in the perinuclear-nuclear localization of the capsid protein VP1 during virion assembly and maturation. May contribute to viral genome transcription and translation of viral late proteins. Plays an important role in the release of progeny virions from infected cells and in viral propagation. The polypeptide is Squirrel monkey agnoprotein (agnogene) (Saimiri boliviensis boliviensis (Bolivian squirrel monkey)).